The chain runs to 164 residues: Two-component response regulator ARR16 (164 aa).

The Response regulatory domain maps to 30–160 (HVLAVDDNLI…DVEKLKCHLM (131 aa)). Residue aspartate 93 is modified to 4-aspartylphosphate.

The protein belongs to the ARR family. Type-A subfamily. Two-component system major event consists of a His-to-Asp phosphorelay between a sensor histidine kinase (HK) and a response regulator (RR). In plants, the His-to-Asp phosphorelay involves an additional intermediate named Histidine-containing phosphotransfer protein (HPt). This multistep phosphorelay consists of a His-Asp-His-Asp sequential transfer of a phosphate group between first a His and an Asp of the HK protein, followed by the transfer to a conserved His of the HPt protein and finally the transfer to an Asp in the receiver domain of the RR protein.

Its subcellular location is the nucleus. In terms of biological role, functions as a response regulator involved in His-to-Asp phosphorelay signal transduction system. Phosphorylation of the Asp residue in the receiver domain activates the ability of the protein to promote the transcription of target genes. Type-A response regulators seem to act as negative regulators of the cytokinin signaling. This is Two-component response regulator ARR16 (ARR16) from Arabidopsis thaliana (Mouse-ear cress).